A 331-amino-acid chain; its full sequence is Biotin synthase (331 aa).

The region spanning 53 to 272 (NHVETASLLS…LATARVMMPR (220 aa)) is the Radical SAM core domain. The [4Fe-4S] cluster site is built by cysteine 68, cysteine 72, and cysteine 75. The [2Fe-2S] cluster site is built by cysteine 112, cysteine 143, cysteine 203, and arginine 276.

The protein belongs to the radical SAM superfamily. Biotin synthase family. Homodimer. The cofactor is [4Fe-4S] cluster. Requires [2Fe-2S] cluster as cofactor.

It catalyses the reaction (4R,5S)-dethiobiotin + (sulfur carrier)-SH + 2 reduced [2Fe-2S]-[ferredoxin] + 2 S-adenosyl-L-methionine = (sulfur carrier)-H + biotin + 2 5'-deoxyadenosine + 2 L-methionine + 2 oxidized [2Fe-2S]-[ferredoxin]. It functions in the pathway cofactor biosynthesis; biotin biosynthesis; biotin from 7,8-diaminononanoate: step 2/2. In terms of biological role, catalyzes the conversion of dethiobiotin (DTB) to biotin by the insertion of a sulfur atom into dethiobiotin via a radical-based mechanism. This is Biotin synthase from Bradyrhizobium diazoefficiens (strain JCM 10833 / BCRC 13528 / IAM 13628 / NBRC 14792 / USDA 110).